The sequence spans 1070 residues: uncharacterized protein (1070 aa).

Disordered stretches follow at residues 66-88 (EKEKETNNENTSNVNKIKSPGLE), 355-388 (DLDFSNVRNKNKEDDMDFSNVRNKKKEDDMDFSN), 423-483 (EDDL…EQID), 667-692 (EELKNDISSETTKEEKNTEHKKEETE), and 735-786 (SKTQ…NNNN). Over residues 73 to 83 (NENTSNVNKIK) the composition is skewed to low complexity. Composition is skewed to basic and acidic residues over residues 435 to 460 (KKEESKENDTNKSEKPLYLRRLEEYR) and 474 to 483 (MKMHEKEQID). The stretch at 475 to 736 (KMHEKEQIDD…EMRLQLIRSK (262 aa)) forms a coiled coil. Residues 735–745 (SKTQGTSSTFI) show a composition bias toward polar residues. Residues 751 to 765 (KHLESLKEEKKKEVK) are compositionally biased toward basic and acidic residues. Low complexity predominate over residues 773–786 (NNNNNNNNNNNNNN).

This is an uncharacterized protein from Plasmodium falciparum (isolate 3D7).